A 360-amino-acid chain; its full sequence is Phospho-N-acetylmuramoyl-pentapeptide-transferase (360 aa).

Helical transmembrane passes span 26-46, 72-92, 94-114, 132-152, 168-188, 199-219, 236-256, 263-283, 288-308, and 338-358; these read AIVS…RMIA, PTMG…LWAY, SNPY…IGFV, WKYF…YLAG, VMPQ…VGTG, GLAI…AWAT, AGEL…FLWF, VFMG…IAVL, FLLV…ILQV, and VIVR…ATLK.

The protein belongs to the glycosyltransferase 4 family. MraY subfamily. It depends on Mg(2+) as a cofactor.

Its subcellular location is the cell inner membrane. It catalyses the reaction UDP-N-acetyl-alpha-D-muramoyl-L-alanyl-gamma-D-glutamyl-meso-2,6-diaminopimeloyl-D-alanyl-D-alanine + di-trans,octa-cis-undecaprenyl phosphate = di-trans,octa-cis-undecaprenyl diphospho-N-acetyl-alpha-D-muramoyl-L-alanyl-D-glutamyl-meso-2,6-diaminopimeloyl-D-alanyl-D-alanine + UMP. The protein operates within cell wall biogenesis; peptidoglycan biosynthesis. Catalyzes the initial step of the lipid cycle reactions in the biosynthesis of the cell wall peptidoglycan: transfers peptidoglycan precursor phospho-MurNAc-pentapeptide from UDP-MurNAc-pentapeptide onto the lipid carrier undecaprenyl phosphate, yielding undecaprenyl-pyrophosphoryl-MurNAc-pentapeptide, known as lipid I. The polypeptide is Phospho-N-acetylmuramoyl-pentapeptide-transferase (Klebsiella pneumoniae subsp. pneumoniae (strain ATCC 700721 / MGH 78578)).